Reading from the N-terminus, the 354-residue chain is Thymidylate synthase (354 aa).

The segment at 1 to 32 (MPAAGSEPSRPPSPPGVQEQSAEPRPPPPPHG) is disordered. Arg-53 contacts dUMP. Residue Ser-117 is modified to Phosphoserine. Position 178-179 (178-179 (RR)) interacts with dUMP. Cys-198 serves as the catalytic Nucleophile. DUMP is bound by residues 218–221 (RSGD), Asn-229, and 259–261 (HIY). Residue Asp-221 coordinates (6R)-5,10-methylene-5,6,7,8-tetrahydrofolate. A Glycyl lysine isopeptide (Lys-Gly) (interchain with G-Cter in SUMO2) cross-link involves residue Lys-349. Ala-353 lines the (6R)-5,10-methylene-5,6,7,8-tetrahydrofolate pocket.

This sequence belongs to the thymidylate synthase family. In terms of assembly, homodimer.

It is found in the nucleus. It localises to the cytoplasm. The protein resides in the mitochondrion. Its subcellular location is the mitochondrion matrix. The protein localises to the mitochondrion inner membrane. The catalysed reaction is dUMP + (6R)-5,10-methylene-5,6,7,8-tetrahydrofolate = 7,8-dihydrofolate + dTMP. Its pathway is pyrimidine metabolism; dTTP biosynthesis. Catalyzes the reductive methylation of 2'-deoxyuridine 5'-monophosphate (dUMP) to thymidine 5'-monophosphate (dTMP), using the cosubstrate, 5,10- methylenetetrahydrofolate (CH2H4folate) as a 1-carbon donor and reductant and contributes to the de novo mitochondrial thymidylate biosynthesis pathway. The polypeptide is Thymidylate synthase (TYMS) (Bos taurus (Bovine)).